A 376-amino-acid polypeptide reads, in one-letter code: Zinc transporter 7 (376 aa).

Over M1–N37 the chain is Cytoplasmic. Residues L38 to W58 form a helical membrane-spanning segment. At S59 to D67 the chain is on the lumenal side. A helical membrane pass occupies residues S68–S88. At K89–R102 the chain is on the cytoplasmic side. The chain crosses the membrane as a helical span at residues A103–F123. Over S124–R140 the chain is Lumenal. A helical membrane pass occupies residues L141–H161. The segment at H161–H218 is his-rich loop. At G162–G236 the chain is on the cytoplasmic side. Over residues H194–S222 the composition is skewed to basic and acidic residues. The tract at residues H194–T226 is disordered. Residues V237 to M257 traverse the membrane as a helical segment. Residues M258–G262 lie on the Lumenal side of the membrane. Residues L263–I283 traverse the membrane as a helical segment. The Cytoplasmic portion of the chain corresponds to P284–M376.

Belongs to the cation diffusion facilitator (CDF) transporter (TC 2.A.4) family. SLC30A subfamily. In terms of assembly, homooligomer. As to expression, highly expressed in megakaryocytes and other bone marrow cells and in the epithelium of the small intestine. Expressed in testis (in Leydig cells), adrenal gland (in adrenal medula, zona fasciculata and zona of reticularis), and pituitary gland (in somatotropic cells).

It is found in the golgi apparatus membrane. The protein localises to the cytoplasmic vesicle. Its subcellular location is the golgi apparatus. The protein resides in the trans-Golgi network. It localises to the sarcoplasmic reticulum. It is found in the mitochondrion. The enzyme catalyses Zn(2+)(in) = Zn(2+)(out). Functionally, zinc ion transporter mediating zinc entry from the cytosol into the lumen of organelles along the secretory pathway. By contributing to zinc ion homeostasis within the early secretory pathway, regulates the activation and folding of enzymes like alkaline phosphatases. The sequence is that of Zinc transporter 7 from Homo sapiens (Human).